The chain runs to 150 residues: Large ribosomal subunit protein uL13 (150 aa).

The tract at residues 127–150 is disordered; that stretch reads KGTEHPHSAQKPQPLQLNPSATAK. Over residues 136 to 150 the composition is skewed to polar residues; that stretch reads QKPQPLQLNPSATAK.

Belongs to the universal ribosomal protein uL13 family. In terms of assembly, part of the 50S ribosomal subunit.

Its function is as follows. This protein is one of the early assembly proteins of the 50S ribosomal subunit, although it is not seen to bind rRNA by itself. It is important during the early stages of 50S assembly. This chain is Large ribosomal subunit protein uL13, found in Synechococcus sp. (strain CC9902).